Reading from the N-terminus, the 119-residue chain is Large ribosomal subunit protein bL19 (119 aa).

It belongs to the bacterial ribosomal protein bL19 family.

Functionally, this protein is located at the 30S-50S ribosomal subunit interface and may play a role in the structure and function of the aminoacyl-tRNA binding site. This chain is Large ribosomal subunit protein bL19, found in Idiomarina loihiensis (strain ATCC BAA-735 / DSM 15497 / L2-TR).